A 197-amino-acid chain; its full sequence is Protein-methionine-sulfoxide reductase heme-binding subunit MsrQ (197 aa).

Transmembrane regions (helical) follow at residues 10–30 (IFIV…MNLL), 42–62 (LGLG…LQKL), 75–95 (LGLW…FFIL), 110–130 (PYII…VTSN), 147–167 (LVYA…RSDL), and 169–189 (EWAI…PAVA).

The protein belongs to the MsrQ family. Heterodimer of a catalytic subunit (MsrP) and a heme-binding subunit (MsrQ). Requires FMN as cofactor. Heme b serves as cofactor.

It localises to the cell inner membrane. Functionally, part of the MsrPQ system that repairs oxidized periplasmic proteins containing methionine sulfoxide residues (Met-O), using respiratory chain electrons. Thus protects these proteins from oxidative-stress damage caused by reactive species of oxygen and chlorine generated by the host defense mechanisms. MsrPQ is essential for the maintenance of envelope integrity under bleach stress, rescuing a wide series of structurally unrelated periplasmic proteins from methionine oxidation. MsrQ provides electrons for reduction to the reductase catalytic subunit MsrP, using the quinone pool of the respiratory chain. This Pseudomonas putida (strain ATCC 47054 / DSM 6125 / CFBP 8728 / NCIMB 11950 / KT2440) protein is Protein-methionine-sulfoxide reductase heme-binding subunit MsrQ.